The chain runs to 249 residues: Enolase-phosphatase E1 (249 aa).

This sequence belongs to the HAD-like hydrolase superfamily. MasA/MtnC family. In terms of assembly, monomer. Requires Mg(2+) as cofactor.

The catalysed reaction is 5-methylsulfanyl-2,3-dioxopentyl phosphate + H2O = 1,2-dihydroxy-5-(methylsulfanyl)pent-1-en-3-one + phosphate. It participates in amino-acid biosynthesis; L-methionine biosynthesis via salvage pathway; L-methionine from S-methyl-5-thio-alpha-D-ribose 1-phosphate: step 3/6. The protein operates within amino-acid biosynthesis; L-methionine biosynthesis via salvage pathway; L-methionine from S-methyl-5-thio-alpha-D-ribose 1-phosphate: step 4/6. In terms of biological role, bifunctional enzyme that catalyzes the enolization of 2,3-diketo-5-methylthiopentyl-1-phosphate (DK-MTP-1-P) into the intermediate 2-hydroxy-3-keto-5-methylthiopentenyl-1-phosphate (HK-MTPenyl-1-P), which is then dephosphorylated to form the acireductone 1,2-dihydroxy-3-keto-5-methylthiopentene (DHK-MTPene). This is Enolase-phosphatase E1 from Pseudomonas aeruginosa (strain ATCC 15692 / DSM 22644 / CIP 104116 / JCM 14847 / LMG 12228 / 1C / PRS 101 / PAO1).